The sequence spans 516 residues: Adenosine deaminase (516 aa).

The signal sequence occupies residues 1–20 (MFPRLIVWLLAASAVHAVLD).

Belongs to the metallo-dependent hydrolases superfamily. Adenosine and AMP deaminases family. ADGF subfamily. Zn(2+) serves as cofactor. As to expression, salivary gland (at protein level).

It is found in the secreted. The enzyme catalyses adenosine + H2O + H(+) = inosine + NH4(+). In terms of biological role, catalyzes the deamination of adenosine to inosine. This chain is Adenosine deaminase, found in Phlebotomus duboscqi (Sandfly).